Reading from the N-terminus, the 56-residue chain is Large ribosomal subunit protein eL37 (56 aa).

Positions 19, 22, 34, and 37 each coordinate Zn(2+). The C4-type zinc finger occupies 19–37 (CRRCGRLSYNFNRKTCVAC).

This sequence belongs to the eukaryotic ribosomal protein eL37 family. Zn(2+) serves as cofactor.

Its function is as follows. Binds to the 23S rRNA. The chain is Large ribosomal subunit protein eL37 from Methanothrix thermoacetophila (strain DSM 6194 / JCM 14653 / NBRC 101360 / PT) (Methanosaeta thermophila).